Reading from the N-terminus, the 168-residue chain is Lipoprotein signal peptidase (168 aa).

3 helical membrane passes run 15–35 (AIAA…LGLL), 69–89 (WGRW…AVWV), and 95–115 (PLLA…NLID). Residues Asp124 and Asp141 contribute to the active site. The helical transmembrane segment at 133–153 (FPWVFNIADSGISVGVALLLL) threads the bilayer.

It belongs to the peptidase A8 family.

It is found in the cell inner membrane. It catalyses the reaction Release of signal peptides from bacterial membrane prolipoproteins. Hydrolyzes -Xaa-Yaa-Zaa-|-(S,diacylglyceryl)Cys-, in which Xaa is hydrophobic (preferably Leu), and Yaa (Ala or Ser) and Zaa (Gly or Ala) have small, neutral side chains.. Its pathway is protein modification; lipoprotein biosynthesis (signal peptide cleavage). This protein specifically catalyzes the removal of signal peptides from prolipoproteins. This chain is Lipoprotein signal peptidase, found in Caulobacter vibrioides (strain ATCC 19089 / CIP 103742 / CB 15) (Caulobacter crescentus).